The chain runs to 175 residues: Adenine phosphoribosyltransferase (175 aa).

Belongs to the purine/pyrimidine phosphoribosyltransferase family. Homodimer.

It localises to the cytoplasm. The enzyme catalyses AMP + diphosphate = 5-phospho-alpha-D-ribose 1-diphosphate + adenine. It participates in purine metabolism; AMP biosynthesis via salvage pathway; AMP from adenine: step 1/1. Catalyzes a salvage reaction resulting in the formation of AMP, that is energically less costly than de novo synthesis. The sequence is that of Adenine phosphoribosyltransferase from Thermosipho melanesiensis (strain DSM 12029 / CIP 104789 / BI429).